The sequence spans 425 residues: Melibiose permease (425 aa).

Residues 1-13 are Cytoplasmic-facing; it reads MNTTTCTHKDNPN. Residues 14-34 traverse the membrane as a helical segment; that stretch reads FWIFGLFFFLYFFIMATCFPF. The Periplasmic segment spans residues 35-50; the sequence is LPIWLSDIIGLNKTHT. The helical transmembrane segment at 51 to 71 threads the bilayer; the sequence is GIVFSCISLSAIAFQPVLGVI. Over 72 to 80 the chain is Cytoplasmic; the sequence is SDKLGLKKH. The chain crosses the membrane as a helical span at residues 81-101; that stretch reads LLWIISVLLFLFAPFFLYVFA. Topologically, residues 102–107 are periplasmic; it reads PLLKTN. Residues 108 to 128 traverse the membrane as a helical segment; the sequence is IWLGALSGGLYIGFVFSAGSG. Topologically, residues 129 to 149 are cytoplasmic; the sequence is AIEAYIERVSRNSAFEYGKAR. A helical membrane pass occupies residues 150 to 170; that stretch reads MFGCLGWGLCASTGGILFGID. A topological domain (periplasmic) is located at residue Pro171. A helical transmembrane segment spans residues 172-192; the sequence is SYVFWMGSAAALLLMLLLVVA. Residues 193-227 are Cytoplasmic-facing; the sequence is KPKPNQTAQVMNALGANQPQITAKKVFNLFRQRRM. Residues 228–248 traverse the membrane as a helical segment; sequence WMFILYVIGVACVYDVFDQQF. The Periplasmic segment spans residues 249 to 267; it reads ATFFKTFFATPQEGTRAFG. Residues 268–288 form a helical membrane-spanning segment; that stretch reads FATTAGEICNAIIMFCSPWII. Residues 289–297 are Cytoplasmic-facing; the sequence is NRIGAKNTL. A helical membrane pass occupies residues 298 to 318; that stretch reads LIAGLIMATRIIGSSFATTAV. At 319–325 the chain is on the periplasmic side; it reads EVIALKM. A helical membrane pass occupies residues 326-346; the sequence is LHALEVPFLLVGAFKYITGVF. The Cytoplasmic segment spans residues 347–353; it reads DTRLSAT. A helical transmembrane segment spans residues 354 to 374; it reads IYLIGFQFAKQSAAIFLSAFA. Residues 375-385 lie on the Periplasmic side of the membrane; it reads GNMYDRIGFQE. The chain crosses the membrane as a helical span at residues 386 to 406; sequence TYLMLGCFVLAITVVSAFTLS. Residues 407-425 are Cytoplasmic-facing; the sequence is SRQEIAAAAGAAALTSQSR.

The protein belongs to the major facilitator superfamily. Oligosaccharide:H(+) symporter (OHS) (TC 2.A.1.5) family.

It is found in the cell inner membrane. In terms of biological role, responsible for transport of melibiose into the cell, with the concomitant import of a proton (symport system). Can also transport lactose, and has weak activity with maltose. Cannot transport the analog methyl-1-thio-beta,D-galactopyranoside (TMG). This Enterobacter cloacae subsp. cloacae (strain ATCC 13047 / DSM 30054 / NBRC 13535 / NCTC 10005 / WDCM 00083 / NCDC 279-56) protein is Melibiose permease.